The primary structure comprises 686 residues: Pollen receptor-like kinase 5 (686 aa).

An N-terminal signal peptide occupies residues 1-39; sequence MRNWEDPFTLACNTALKKNLPSCIFIIIFISVLCPVAMS. Topologically, residues 40–283 are extracellular; it reads QVVVPDSDAD…GKKAGSFYTL (244 aa). N60 carries an N-linked (GlcNAc...) asparagine glycan. 5 LRR repeats span residues 112–135, 136–159, 161–184, 185–208, and 210–230; these read MKNL…VKRF, TSLK…AFLG, PLLK…LASL, PMLL…QQKD, and KLAS…LRNM. Residues 284–304 traverse the membrane as a helical segment; that stretch reads AIILIVIGIILVIIALVFCFV. The Cytoplasmic segment spans residues 305–686; the sequence is QSRRRNFLSA…DDDFGFSMNR (382 aa). A compositionally biased stretch (polar residues) spans 328–339; sequence NYHQSTNKNNKP. Residues 328-355 are disordered; that stretch reads NYHQSTNKNNKPAESVNHTRRGSMPDPG. Residues 375-648 form the Protein kinase domain; it reads RASAEVLGSG…REVVEMVEML (274 aa). S377 bears the Phosphoserine mark. Residues 381 to 389 and K403 contribute to the ATP site; that span reads LGSGTFGAS. A phosphoserine mark is found at S455 and S458. T472 is modified (phosphothreonine). The residue at position 542 (Y542) is a Phosphotyrosine. Phosphoserine is present on S545.

This sequence belongs to the protein kinase superfamily. Ser/Thr protein kinase family. Interacts with the GRI peptide. As to expression, expressed in pollen and/or in flowers. Detected at low levels in leaves.

It localises to the cell membrane. The enzyme catalyses L-seryl-[protein] + ATP = O-phospho-L-seryl-[protein] + ADP + H(+). The catalysed reaction is L-threonyl-[protein] + ATP = O-phospho-L-threonyl-[protein] + ADP + H(+). Receptor-like kinase involved in the control of pollen germination and pollen tube polar growth. The extracellular domain serves as a sensor for peptides derived from GRI. May act as a downstream element for ROS-dependent cell death induced by GRI. This is Pollen receptor-like kinase 5 from Arabidopsis thaliana (Mouse-ear cress).